The sequence spans 195 residues: E3 ubiquitin-protein ligase ZNRF1 (195 aa).

Over residues 1–10 the composition is skewed to polar residues; that stretch reads MGGKQSSASR. The disordered stretch occupies residues 1 to 37; that stretch reads MGGKQSSASRSRAPFPGVSSDDSAVPPSSNFGHFRGG. Glycine 2 is lipidated: N-myristoyl glycine. Over residues 18-29 the composition is skewed to low complexity; that stretch reads VSSDDSAVPPSS. The RING-type; atypical zinc-finger motif lies at 152 to 193; it reads CVICLEELSQGDTIARLPCLCIYHKSCIDSWFEVNRCCPEHP.

Its subcellular location is the endosome. It localises to the lysosome. The protein resides in the membrane. The enzyme catalyses S-ubiquitinyl-[E2 ubiquitin-conjugating enzyme]-L-cysteine + [acceptor protein]-L-lysine = [E2 ubiquitin-conjugating enzyme]-L-cysteine + N(6)-ubiquitinyl-[acceptor protein]-L-lysine.. It functions in the pathway protein modification; protein ubiquitination. In terms of biological role, E3 ubiquitin-protein ligase that plays a role in neuron cells differentiation. Plays a role in the establishment and maintenance of neuronal transmission and plasticity. The protein is E3 ubiquitin-protein ligase ZNRF1 (znrf1) of Xenopus laevis (African clawed frog).